The chain runs to 317 residues: uncharacterized protein (317 aa).

The HTH lysR-type domain maps to 29-86; it reads IDLNLLTIFEAVYVHKGIVNAAKVLNLTPSAISQSIQKLRVIFPDPLFIRKGQGVTPT. The segment at residues 46-65 is a DNA-binding region (H-T-H motif); it reads IVNAAKVLNLTPSAISQSIQ.

Belongs to the LysR transcriptional regulatory family.

This is an uncharacterized protein from Escherichia coli (strain K12).